Reading from the N-terminus, the 220-residue chain is 3-dehydroquinate dehydratase (220 aa).

3-dehydroquinate is bound by residues serine 8, 30-32, and arginine 63; that span reads ELR. Histidine 114 serves as the catalytic Proton donor/acceptor. Catalysis depends on lysine 140, which acts as the Schiff-base intermediate with substrate. 2 residues coordinate 3-dehydroquinate: arginine 174 and glutamine 197.

It belongs to the type-I 3-dehydroquinase family. In terms of assembly, homodimer.

It catalyses the reaction 3-dehydroquinate = 3-dehydroshikimate + H2O. It participates in metabolic intermediate biosynthesis; chorismate biosynthesis; chorismate from D-erythrose 4-phosphate and phosphoenolpyruvate: step 3/7. Its function is as follows. Involved in the third step of the chorismate pathway, which leads to the biosynthesis of aromatic amino acids. Catalyzes the cis-dehydration of 3-dehydroquinate (DHQ) and introduces the first double bond of the aromatic ring to yield 3-dehydroshikimate. The polypeptide is 3-dehydroquinate dehydratase (Saccharolobus solfataricus (strain ATCC 35092 / DSM 1617 / JCM 11322 / P2) (Sulfolobus solfataricus)).